A 122-amino-acid polypeptide reads, in one-letter code: Large ribosomal subunit protein uL14 (122 aa).

Belongs to the universal ribosomal protein uL14 family. Part of the 50S ribosomal subunit. Forms a cluster with proteins L3 and L19. In the 70S ribosome, L14 and L19 interact and together make contacts with the 16S rRNA in bridges B5 and B8.

In terms of biological role, binds to 23S rRNA. Forms part of two intersubunit bridges in the 70S ribosome. This is Large ribosomal subunit protein uL14 from Anaeromyxobacter dehalogenans (strain 2CP-1 / ATCC BAA-258).